A 365-amino-acid chain; its full sequence is SWR1 complex subunit 2 (365 aa).

2 disordered regions span residues 43 to 83 and 95 to 147; these read ALKE…NEKE and PGKT…EGEK. Acidic residues predominate over residues 48–74; it reads EHDDEYEAEREVADEFDSDFNDDEPEP. Residues 99-108 show a composition bias toward basic residues; it reads ASKKKKKKTK. Residues 118-132 are compositionally biased toward basic and acidic residues; the sequence is GDEKPGEELGNKEQE. Coiled coils occupy residues 123-150 and 184-225; these read GEEL…KVIR and GEEK…KAIV. The span at 133–144 shows a compositional bias: acidic residues; sequence EKEENEAQEDME. Residues 333–365 form a disordered region; the sequence is RTKIPKSNKSFSLRSSARFLSSESEEESEEDSD. A compositionally biased stretch (low complexity) spans 342–354; that stretch reads SFSLRSSARFLSS. Residues 355 to 365 are compositionally biased toward acidic residues; that stretch reads ESEEESEEDSD.

Belongs to the VPS72/YL1 family. As to quaternary structure, component of the SWR1 chromatin-remodeling complex composed of at least ARP6/ESD1/SUF3, PIE1, SWC6, SWC2 and H2AZs (HTA8, HTA9, HTA11). Interacts directly with SWC6 and H2AZs, but not with ARP6.

Component of the SWR1 complex which mediates the ATP-dependent exchange of histone H2A for the H2A variant H2A.F/Z leading to transcriptional regulation of selected genes (e.g. FLC) by chromatin remodeling. The polypeptide is SWR1 complex subunit 2 (SWC2) (Arabidopsis thaliana (Mouse-ear cress)).